The chain runs to 304 residues: Release factor glutamine methyltransferase (304 aa).

2 residues coordinate S-adenosyl-L-methionine: D144 and N188. 188–191 (NPPY) serves as a coordination point for substrate.

It belongs to the protein N5-glutamine methyltransferase family. PrmC subfamily.

The catalysed reaction is L-glutaminyl-[peptide chain release factor] + S-adenosyl-L-methionine = N(5)-methyl-L-glutaminyl-[peptide chain release factor] + S-adenosyl-L-homocysteine + H(+). In terms of biological role, methylates the class 1 translation termination release factors RF1/PrfA and RF2/PrfB on the glutamine residue of the universally conserved GGQ motif. The sequence is that of Release factor glutamine methyltransferase from Mycobacterium tuberculosis (strain ATCC 25618 / H37Rv).